Reading from the N-terminus, the 102-residue chain is Large ribosomal subunit protein bL21 (102 aa).

It belongs to the bacterial ribosomal protein bL21 family. In terms of assembly, part of the 50S ribosomal subunit. Contacts protein L20.

In terms of biological role, this protein binds to 23S rRNA in the presence of protein L20. The polypeptide is Large ribosomal subunit protein bL21 (Pelobacter propionicus (strain DSM 2379 / NBRC 103807 / OttBd1)).